A 2032-amino-acid chain; its full sequence is Cytoskeleton-associated protein 5 (2032 aa).

TOG regions lie at residues Met-1 to Thr-223, Tyr-268 to Gly-502, and Ser-588 to Pro-817. At Lys-48 the chain carries N6-acetyllysine. 3 HEAT repeats span residues Ile-159–Asp-197, Gly-356–Leu-394, and Lys-434–Glu-472. Residues His-501 to Thr-579 are disordered. The stretch at Glu-750 to Pro-788 is one HEAT 4 repeat. The interval Lys-811–Val-848 is disordered. Ser-816 carries the post-translational modification Phosphoserine. The segment covering Asp-833–Gly-842 has biased composition (acidic residues). 2 TOG regions span residues Pro-853 to Pro-1081 and Ile-1193 to Ser-1428. HEAT repeat units follow at residues Ile-855–Phe-893, Arg-936–Met-974, and Pro-1013–Tyr-1051. The span at Ala-1078–Met-1095 shows a compositional bias: low complexity. A disordered region spans residues Ala-1078–Lys-1156. 3 HEAT repeats span residues Glu-1284–Ala-1322, Lys-1324–Met-1357, and Gln-1361–Asp-1399. The segment at Ile-1420 to Asp-1459 is disordered. The span at Arg-1441 to Asn-1450 shows a compositional bias: polar residues. Ser-1469 carries the post-translational modification Phosphoserine. The disordered stretch occupies residues Ser-1801 to Glu-1822. The segment covering Lys-1808–Glu-1822 has biased composition (basic and acidic residues). Ser-1861 carries the phosphoserine modification. Disordered regions lie at residues Ser-1893–Asn-1926 and Leu-1948–Lys-2032. The span at Val-1909–Ser-1921 shows a compositional bias: low complexity. The tract at residues Pro-1932 to Pro-1957 is interaction with TACC3. The segment covering Ala-1972–Ser-1983 has biased composition (polar residues). The span at Gln-1984–Leu-1997 shows a compositional bias: basic and acidic residues. The span at Thr-2002 to Thr-2015 shows a compositional bias: low complexity. Residues Asp-2018–Lys-2032 are compositionally biased toward basic and acidic residues.

Belongs to the TOG/XMAP215 family. As to quaternary structure, interacts with TACC1. Interacts with HNRNPA2B1. Interacts with TACC3 independently of clathrin. Interacts with TACC3 and clathrin forming the TACC3/ch-TOG/clathrin complex located at spindle inter-microtubules bridges. Interacts with NDC80; indicative for an association with the NDC80 complex. Interacts with SLAIN2. Interacts with SLAIN1.

Its subcellular location is the cytoplasm. It localises to the cytoskeleton. The protein resides in the microtubule organizing center. It is found in the centrosome. The protein localises to the spindle pole. Its subcellular location is the spindle. It localises to the chromosome. The protein resides in the centromere. It is found in the kinetochore. In terms of biological role, binds to the plus end of microtubules and regulates microtubule dynamics and microtubule organization. Acts as a processive microtubule polymerase. Promotes cytoplasmic microtubule nucleation and elongation. Plays a major role in organizing spindle poles. In spindle formation protects kinetochore microtubules from depolymerization by KIF2C and has an essential role in centrosomal microtubule assembly independently of KIF2C activity. Contributes to centrosome integrity. Acts as a component of the TACC3/ch-TOG/clathrin complex proposed to contribute to stabilization of kinetochore fibers of the mitotic spindle by acting as inter-microtubule bridge. The TACC3/ch-TOG/clathrin complex is required for the maintenance of kinetochore fiber tension. Enhances the strength of NDC80 complex-mediated kinetochore-tip microtubule attachments. The chain is Cytoskeleton-associated protein 5 from Mus musculus (Mouse).